Reading from the N-terminus, the 244-residue chain is Ribosome maturation factor RimM (244 aa).

The segment at 1-58 (MSERDSGSSGPVKAKAAAPRAKTSGQAPFGAFVRKPVEKTEGKAKANAANAGSGATEM) is disordered. Positions 13-22 (KAKAAAPRAK) are enriched in low complexity. Residues 35–44 (KPVEKTEGKA) show a composition bias toward basic and acidic residues. Residues 45 to 57 (KANAANAGSGATE) show a composition bias toward low complexity. Positions 163-244 (ADEFYWVDLL…QITVDWEADY (82 aa)) constitute a PRC barrel domain.

The protein belongs to the RimM family. As to quaternary structure, binds ribosomal protein uS19.

It localises to the cytoplasm. In terms of biological role, an accessory protein needed during the final step in the assembly of 30S ribosomal subunit, possibly for assembly of the head region. Essential for efficient processing of 16S rRNA. May be needed both before and after RbfA during the maturation of 16S rRNA. It has affinity for free ribosomal 30S subunits but not for 70S ribosomes. The chain is Ribosome maturation factor RimM from Paraburkholderia xenovorans (strain LB400).